A 206-amino-acid polypeptide reads, in one-letter code: Insecticyanin-B (206 aa).

An N-terminal signal peptide occupies residues methionine 1–alanine 17. 2 disulfide bridges follow: cysteine 26/cysteine 136 and cysteine 60/cysteine 192.

The protein belongs to the calycin superfamily. Lipocalin family. Homotetramer. Synthesized only in the caterpillars, apparently by the epidermis and secreted into the hemolymph. The protein is passed over from the larval hemolymph to that of pupae and adults and is sequestered in the eggs.

Its subcellular location is the secreted. Its function is as follows. This protein binds a chromophore: biliverdin IX, isomer gamma. Mixed with lipoprotein-bound carotenes, this blue protein provides hornworms with their green cryptic coloration which serves a camouflage. This chain is Insecticyanin-B (INSB), found in Manduca sexta (Tobacco hawkmoth).